The sequence spans 447 residues: tRNA-2-methylthio-N(6)-dimethylallyladenosine synthase (447 aa).

The MTTase N-terminal domain occupies 8–126 (KKVVTLAYGC…FQRLLEEAEE (119 aa)). C17, C53, C87, C162, C166, and C169 together coordinate [4Fe-4S] cluster. In terms of domain architecture, Radical SAM core spans 148 to 378 (AKGKLKAYVN…ITVQNAQSLA (231 aa)). Positions 381-444 (QEMIGKTCEV…SWTLFGECRA (64 aa)) constitute a TRAM domain.

It belongs to the methylthiotransferase family. MiaB subfamily. As to quaternary structure, monomer. It depends on [4Fe-4S] cluster as a cofactor.

The protein localises to the cytoplasm. It catalyses the reaction N(6)-dimethylallyladenosine(37) in tRNA + (sulfur carrier)-SH + AH2 + 2 S-adenosyl-L-methionine = 2-methylsulfanyl-N(6)-dimethylallyladenosine(37) in tRNA + (sulfur carrier)-H + 5'-deoxyadenosine + L-methionine + A + S-adenosyl-L-homocysteine + 2 H(+). Its function is as follows. Catalyzes the methylthiolation of N6-(dimethylallyl)adenosine (i(6)A), leading to the formation of 2-methylthio-N6-(dimethylallyl)adenosine (ms(2)i(6)A) at position 37 in tRNAs that read codons beginning with uridine. The polypeptide is tRNA-2-methylthio-N(6)-dimethylallyladenosine synthase (Desulfitobacterium hafniense (strain Y51)).